The primary structure comprises 87 residues: Phosphoribosyl-ATP pyrophosphatase (87 aa).

The protein belongs to the PRA-PH family.

Its subcellular location is the cytoplasm. It carries out the reaction 1-(5-phospho-beta-D-ribosyl)-ATP + H2O = 1-(5-phospho-beta-D-ribosyl)-5'-AMP + diphosphate + H(+). It functions in the pathway amino-acid biosynthesis; L-histidine biosynthesis; L-histidine from 5-phospho-alpha-D-ribose 1-diphosphate: step 2/9. This chain is Phosphoribosyl-ATP pyrophosphatase, found in Saccharopolyspora erythraea (strain ATCC 11635 / DSM 40517 / JCM 4748 / NBRC 13426 / NCIMB 8594 / NRRL 2338).